A 79-amino-acid chain; its full sequence is D-alanyl carrier protein (79 aa).

The Carrier domain occupies 1-77; the sequence is MTVEEKIIDA…KIVEGVKELQ (77 aa). Serine 35 carries the O-(pantetheine 4'-phosphoryl)serine modification.

The protein belongs to the DltC family. 4'-phosphopantetheine is transferred from CoA to a specific serine of apo-DCP.

It localises to the cytoplasm. It functions in the pathway cell wall biogenesis; lipoteichoic acid biosynthesis. Its function is as follows. Carrier protein involved in the D-alanylation of lipoteichoic acid (LTA). The loading of thioester-linked D-alanine onto DltC is catalyzed by D-alanine--D-alanyl carrier protein ligase DltA. The DltC-carried D-alanyl group is further transferred to cell membrane phosphatidylglycerol (PG) by forming an ester bond, probably catalyzed by DltD. D-alanylation of LTA plays an important role in modulating the properties of the cell wall in Gram-positive bacteria, influencing the net charge of the cell wall. This chain is D-alanyl carrier protein, found in Streptococcus uberis (strain ATCC BAA-854 / 0140J).